Reading from the N-terminus, the 89-residue chain is Small ribosomal subunit protein uS15 (89 aa).

Positions 1–25 (MSLDTTEKQQLINTHQTHGTDTGSA) are disordered. A compositionally biased stretch (polar residues) spans 8 to 25 (KQQLINTHQTHGTDTGSA).

The protein belongs to the universal ribosomal protein uS15 family. As to quaternary structure, part of the 30S ribosomal subunit. Forms a bridge to the 50S subunit in the 70S ribosome, contacting the 23S rRNA.

Its function is as follows. One of the primary rRNA binding proteins, it binds directly to 16S rRNA where it helps nucleate assembly of the platform of the 30S subunit by binding and bridging several RNA helices of the 16S rRNA. Forms an intersubunit bridge (bridge B4) with the 23S rRNA of the 50S subunit in the ribosome. The sequence is that of Small ribosomal subunit protein uS15 from Synechococcus sp. (strain CC9605).